Consider the following 308-residue polypeptide: Glutaminase (308 aa).

The substrate site is built by S66, N117, E161, N168, Y192, Y244, and V262.

Belongs to the glutaminase family. In terms of assembly, homotetramer.

The catalysed reaction is L-glutamine + H2O = L-glutamate + NH4(+). The protein is Glutaminase of Yersinia pestis bv. Antiqua (strain Nepal516).